A 150-amino-acid polypeptide reads, in one-letter code: SsrA-binding protein (150 aa).

It belongs to the SmpB family.

It localises to the cytoplasm. Its function is as follows. Required for rescue of stalled ribosomes mediated by trans-translation. Binds to transfer-messenger RNA (tmRNA), required for stable association of tmRNA with ribosomes. tmRNA and SmpB together mimic tRNA shape, replacing the anticodon stem-loop with SmpB. tmRNA is encoded by the ssrA gene; the 2 termini fold to resemble tRNA(Ala) and it encodes a 'tag peptide', a short internal open reading frame. During trans-translation Ala-aminoacylated tmRNA acts like a tRNA, entering the A-site of stalled ribosomes, displacing the stalled mRNA. The ribosome then switches to translate the ORF on the tmRNA; the nascent peptide is terminated with the 'tag peptide' encoded by the tmRNA and targeted for degradation. The ribosome is freed to recommence translation, which seems to be the essential function of trans-translation. In Campylobacter jejuni (strain RM1221), this protein is SsrA-binding protein.